The following is a 237-amino-acid chain: Sugar fermentation stimulation protein homolog (237 aa).

The protein belongs to the SfsA family.

This Azorhizobium caulinodans (strain ATCC 43989 / DSM 5975 / JCM 20966 / LMG 6465 / NBRC 14845 / NCIMB 13405 / ORS 571) protein is Sugar fermentation stimulation protein homolog.